The following is a 201-amino-acid chain: Orotate phosphoribosyltransferase (201 aa).

113-121 (EDIITTGKS) is a 5-phospho-alpha-D-ribose 1-diphosphate binding site. Threonine 117 and arginine 145 together coordinate orotate.

Belongs to the purine/pyrimidine phosphoribosyltransferase family. PyrE subfamily. Homodimer. The cofactor is Mg(2+).

The catalysed reaction is orotidine 5'-phosphate + diphosphate = orotate + 5-phospho-alpha-D-ribose 1-diphosphate. It participates in pyrimidine metabolism; UMP biosynthesis via de novo pathway; UMP from orotate: step 1/2. In terms of biological role, catalyzes the transfer of a ribosyl phosphate group from 5-phosphoribose 1-diphosphate to orotate, leading to the formation of orotidine monophosphate (OMP). The chain is Orotate phosphoribosyltransferase from Helicobacter pylori (strain HPAG1).